The primary structure comprises 245 residues: Orotidine 5'-phosphate decarboxylase (245 aa).

Residues D22, K44, D71–T80, T131, R192, Q201, G221, and R222 each bind substrate. The active-site Proton donor is K73.

Belongs to the OMP decarboxylase family. Type 1 subfamily. Homodimer.

The catalysed reaction is orotidine 5'-phosphate + H(+) = UMP + CO2. Its pathway is pyrimidine metabolism; UMP biosynthesis via de novo pathway; UMP from orotate: step 2/2. Functionally, catalyzes the decarboxylation of orotidine 5'-monophosphate (OMP) to uridine 5'-monophosphate (UMP). The sequence is that of Orotidine 5'-phosphate decarboxylase from Salmonella paratyphi A (strain ATCC 9150 / SARB42).